A 331-amino-acid chain; its full sequence is Ketol-acid reductoisomerase (NADP(+)) (331 aa).

The KARI N-terminal Rossmann domain occupies 2–182; the sequence is ARLYYDADAN…GGTRAGILET (181 aa). Residues 25-28, S51, S53, and 83-86 contribute to the NADP(+) site; these read YGSQ and DEVQ. Residue H108 is part of the active site. G134 contributes to the NADP(+) binding site. The KARI C-terminal knotted domain occupies 183-328; it reads TFREETETDL…KDLRAMFSWL (146 aa). Mg(2+) is bound by residues D191, E195, E227, and E231. Substrate is bound at residue S252.

It belongs to the ketol-acid reductoisomerase family. The cofactor is Mg(2+).

It carries out the reaction (2R)-2,3-dihydroxy-3-methylbutanoate + NADP(+) = (2S)-2-acetolactate + NADPH + H(+). The enzyme catalyses (2R,3R)-2,3-dihydroxy-3-methylpentanoate + NADP(+) = (S)-2-ethyl-2-hydroxy-3-oxobutanoate + NADPH + H(+). It functions in the pathway amino-acid biosynthesis; L-isoleucine biosynthesis; L-isoleucine from 2-oxobutanoate: step 2/4. It participates in amino-acid biosynthesis; L-valine biosynthesis; L-valine from pyruvate: step 2/4. Functionally, involved in the biosynthesis of branched-chain amino acids (BCAA). Catalyzes an alkyl-migration followed by a ketol-acid reduction of (S)-2-acetolactate (S2AL) to yield (R)-2,3-dihydroxy-isovalerate. In the isomerase reaction, S2AL is rearranged via a Mg-dependent methyl migration to produce 3-hydroxy-3-methyl-2-ketobutyrate (HMKB). In the reductase reaction, this 2-ketoacid undergoes a metal-dependent reduction by NADPH to yield (R)-2,3-dihydroxy-isovalerate. This is Ketol-acid reductoisomerase (NADP(+)) from Cyanothece sp. (strain PCC 7425 / ATCC 29141).